The chain runs to 147 residues: Large ribosomal subunit protein uL22 (147 aa).

The segment at 110–147 (EEKKTVAKKAPAAKKTTTTKAPAKKTTSTKKATAKKES) is disordered. Residues 117–140 (KKAPAAKKTTTTKAPAKKTTSTKK) are compositionally biased toward low complexity.

The protein belongs to the universal ribosomal protein uL22 family. Part of the 50S ribosomal subunit.

Functionally, this protein binds specifically to 23S rRNA; its binding is stimulated by other ribosomal proteins, e.g. L4, L17, and L20. It is important during the early stages of 50S assembly. It makes multiple contacts with different domains of the 23S rRNA in the assembled 50S subunit and ribosome. The globular domain of the protein is located near the polypeptide exit tunnel on the outside of the subunit, while an extended beta-hairpin is found that lines the wall of the exit tunnel in the center of the 70S ribosome. The polypeptide is Large ribosomal subunit protein uL22 (Campylobacter jejuni subsp. jejuni serotype O:6 (strain 81116 / NCTC 11828)).